Consider the following 59-residue polypeptide: Large ribosomal subunit protein bL33 (59 aa).

Belongs to the bacterial ribosomal protein bL33 family.

The polypeptide is Large ribosomal subunit protein bL33 (Prosthecochloris aestuarii (strain DSM 271 / SK 413)).